Consider the following 208-residue polypeptide: Nascent polypeptide-associated complex subunit alpha (208 aa).

Positions 1 to 19 (MSSSRIEELPDDDVPKTTV) are enriched in basic and acidic residues. Disordered regions lie at residues 1–50 (MSSS…HSRN) and 120–166 (QLAA…VFDA). Acidic residues predominate over residues 21–34 (DAADSSESEVEGAE). The NAC-A/B domain maps to 48–113 (SRNEKKARKA…AKIEDLNSQA (66 aa)). Positions 120 to 131 (QLAAAEAAGSNE) are enriched in low complexity. The span at 132–154 (HAGHDHASHDHGKGKAVESADKK) shows a compositional bias: basic and acidic residues. A compositionally biased stretch (acidic residues) spans 155 to 164 (DEEEDDEEVF). The 40-residue stretch at 169–208 (LEAKDIELVMAQASVSRNKAIKALKENDNDIVNSIMALSV) folds into the UBA domain.

Belongs to the NAC-alpha family. In terms of assembly, part of the nascent polypeptide-associated complex (NAC), consisting of EGD2 and EGD1. NAC associates with ribosomes via EGD1.

It is found in the cytoplasm. Its subcellular location is the nucleus. Functionally, component of the nascent polypeptide-associated complex (NAC), a dynamic component of the ribosomal exit tunnel, protecting the emerging polypeptides from interaction with other cytoplasmic proteins to ensure appropriate nascent protein targeting. The NAC complex also promotes mitochondrial protein import by enhancing productive ribosome interactions with the outer mitochondrial membrane and blocks the inappropriate interaction of ribosomes translating non-secretory nascent polypeptides with translocation sites in the membrane of the endoplasmic reticulum. EGD2 may also be involved in transcription regulation. The protein is Nascent polypeptide-associated complex subunit alpha (EGD2) of Ajellomyces capsulatus (strain NAm1 / WU24) (Darling's disease fungus).